Consider the following 537-residue polypeptide: Pentatricopeptide repeat-containing protein At1g02370, mitochondrial (537 aa).

The transit peptide at 1–18 directs the protein to the mitochondrion; the sequence is MNFRNLIASGSRLGKRFC. PPR repeat units lie at residues 171–205, 206–240, 241–275, 277–307, 312–346, 347–377, and 382–416; these read HQST…NFVN, NSLP…GISP, CGVT…SEAK, TWNT…MEEK, NRDS…RPEV, NNLS…WESK, and DMRL…SKGP.

This sequence belongs to the PPR family. P subfamily.

The protein resides in the mitochondrion. This Arabidopsis thaliana (Mouse-ear cress) protein is Pentatricopeptide repeat-containing protein At1g02370, mitochondrial.